We begin with the raw amino-acid sequence, 275 residues long: HUWE1-associated protein modifying stress responses (275 aa).

Residues 32-44 (AEQDEQLSPELQE) are compositionally biased toward acidic residues. 4 disordered regions span residues 32 to 51 (AEQD…AAAQ), 155 to 181 (RNSR…SSVE), 204 to 228 (SVRS…RRNG), and 250 to 275 (GTRK…NRML). Residue Ser-167 is modified to Phosphoserine. A compositionally biased stretch (low complexity) spans 172–181 (TSTETSSSVE). Residues 204–221 (SVRSSTPGSPTHVSSGPN) show a composition bias toward polar residues. Ser-212 is subject to Phosphoserine.

It belongs to the HAPSTR1 family. In terms of assembly, homooligomer. Heterooligomer with HAPSTR2; the interaction is direct and stabilizes HAPSTR1. Interacts with HUWE1. Post-translationally, ubiquitinated by HUWE1. Promotes HAPSTR1 degradation through polyubiquitination.

It localises to the nucleus. The protein resides in the cytoplasm. Functionally, acts as a central player within a network of stress response pathways promoting cellular adaptability. The E3 ligase HUWE1 assists HAPSTR1 in controlling stress signaling and in turn, HUWE1 feeds back to promote the degradation of HAPSTR1. HAPSTR1 represents a central coordination mechanism for stress response programs. Functions as a negative regulator of TP53/P53 in the cellular response to telomere erosion and probably also DNA damage. May attenuate p53/TP53 activation through the E3 ubiquitin ligase HUWE1. The protein is HUWE1-associated protein modifying stress responses of Mus musculus (Mouse).